We begin with the raw amino-acid sequence, 256 residues long: Ribosomal RNA small subunit methyltransferase A (256 aa).

N12, L14, G39, E60, D85, and N103 together coordinate S-adenosyl-L-methionine.

This sequence belongs to the class I-like SAM-binding methyltransferase superfamily. rRNA adenine N(6)-methyltransferase family. RsmA subfamily.

Its subcellular location is the cytoplasm. The enzyme catalyses adenosine(1518)/adenosine(1519) in 16S rRNA + 4 S-adenosyl-L-methionine = N(6)-dimethyladenosine(1518)/N(6)-dimethyladenosine(1519) in 16S rRNA + 4 S-adenosyl-L-homocysteine + 4 H(+). Its function is as follows. Specifically dimethylates two adjacent adenosines (A1518 and A1519) in the loop of a conserved hairpin near the 3'-end of 16S rRNA in the 30S particle. May play a critical role in biogenesis of 30S subunits. The polypeptide is Ribosomal RNA small subunit methyltransferase A (Legionella pneumophila (strain Lens)).